The chain runs to 368 residues: Protein-glutamate methylesterase/protein-glutamine glutaminase (368 aa).

Residues 9-126 (RVLVVDDSAF…SINMRELKDE (118 aa)) enclose the Response regulatory domain. 4-aspartylphosphate is present on Asp60. One can recognise a CheB-type methylesterase domain in the interval 161–354 (SVPARIAVAI…ETVVRAVEMI (194 aa)). Active-site residues include Ser173, His200, and Asp296.

The protein belongs to the CheB family. Phosphorylated by CheA. Phosphorylation of the N-terminal regulatory domain activates the methylesterase activity.

The protein localises to the cytoplasm. The catalysed reaction is [protein]-L-glutamate 5-O-methyl ester + H2O = L-glutamyl-[protein] + methanol + H(+). It catalyses the reaction L-glutaminyl-[protein] + H2O = L-glutamyl-[protein] + NH4(+). Functionally, involved in chemotaxis. Part of a chemotaxis signal transduction system that modulates chemotaxis in response to various stimuli. Catalyzes the demethylation of specific methylglutamate residues introduced into the chemoreceptors (methyl-accepting chemotaxis proteins or MCP) by CheR. Also mediates the irreversible deamidation of specific glutamine residues to glutamic acid. The chain is Protein-glutamate methylesterase/protein-glutamine glutaminase from Pyrococcus abyssi (strain GE5 / Orsay).